Consider the following 458-residue polypeptide: uncharacterized protein (458 aa).

The TRAM domain maps to 8 to 66 (PVEKNEFIDVVFEDLTHDGAGVAKVKGYPIFVKNGLPGEEAQIKIIKVKKNFAFGRLMK). [4Fe-4S] cluster-binding residues include Cys-79, Cys-85, Cys-88, and Cys-166. Positions 290, 319, 340, and 388 each coordinate S-adenosyl-L-methionine. Cys-415 acts as the Nucleophile in catalysis.

Belongs to the class I-like SAM-binding methyltransferase superfamily. RNA M5U methyltransferase family.

This is an uncharacterized protein from Bacillus cereus (strain ATCC 14579 / DSM 31 / CCUG 7414 / JCM 2152 / NBRC 15305 / NCIMB 9373 / NCTC 2599 / NRRL B-3711).